Reading from the N-terminus, the 735-residue chain is Serine/threonine-protein kinase BRSK2 (735 aa).

Positions 20-271 (YRLEKTLGKG…LEHIQKHIWY (252 aa)) constitute a Protein kinase domain. ATP is bound by residues 26–34 (LGKGQTGLV) and K49. Catalysis depends on D142, which acts as the Proton acceptor. Phosphothreonine; by LKB1 is present on T175. T261 carries the post-translational modification Phosphothreonine; by PKA. S295 carries the phosphoserine modification. In terms of domain architecture, UBA spans 298–340 (DIDPDVLDSMHSLGCFRDRNKLLQDLLSEEENQEKMIYFLLLD). Residues 346–367 (PSHEDEDLPPRNEIDPPRKRVD) are compositionally biased toward basic and acidic residues. Disordered regions lie at residues 346-476 (PSHE…GVPW), 493-514 (FHRRKLQVPTPEEMSNLTPESS), and 682-735 (KNGQ…REQP). S368, S383, S394, S413, A417, S424, and S428 each carry phosphoserine. Residues 411–429 (SRSISGASSGLSTSPLSSP) show a composition bias toward low complexity. The segment covering 432 to 446 (TPHPSPRGSPLPTPK) has biased composition (pro residues). The residue at position 456 (S456) is a Phosphoserine. Phosphothreonine occurs at positions 460, 464, and 510. 2 positions are modified to phosphoserine: S513 and S514.

Belongs to the protein kinase superfamily. CAMK Ser/Thr protein kinase family. SNF1 subfamily. In terms of assembly, interacts with FZR1, a regulatory subunit of the APC ubiquitin ligase complex. Interacts with COPS5. Interacts with PAK1. Mg(2+) serves as cofactor. In terms of processing, may be phosphorylated at Thr-261 by PKA. Phosphorylated at Thr-175 by STK11/LKB1 in complex with STE20-related adapter-alpha (STRADA) pseudo kinase and CAB39. Not phosphorylated at Thr-175 by CaMKK2. In contrast, it is phosphorylated and activated by CaMKK1. May be inactivated via dephosphorylation of Thr-175 by PP2C. Post-translationally, polyubiquitinated by the APC complex in conjunction with FZR1, leading to its proteasomal degradation. Targeted for proteasomal degradation by interaction with COPS5. BRSK2 levels change during the cell cycle. BRSK2 levels are low at the G1/S boundary and gradually increase as cells progress into G2 phase. BRSK2 levels decrease rapidly at the end of mitosis.

The protein localises to the cytoplasm. The protein resides in the cytoskeleton. It is found in the microtubule organizing center. Its subcellular location is the centrosome. It localises to the perinuclear region. The protein localises to the endoplasmic reticulum. The catalysed reaction is L-seryl-[protein] + ATP = O-phospho-L-seryl-[protein] + ADP + H(+). It carries out the reaction L-threonyl-[protein] + ATP = O-phospho-L-threonyl-[protein] + ADP + H(+). It catalyses the reaction L-seryl-[tau protein] + ATP = O-phospho-L-seryl-[tau protein] + ADP + H(+). The enzyme catalyses L-threonyl-[tau protein] + ATP = O-phospho-L-threonyl-[tau protein] + ADP + H(+). With respect to regulation, activated by phosphorylation on Thr-175 by STK11/LKB1. Functionally, serine/threonine-protein kinase that plays a key role in polarization of neurons and axonogenesis, cell cycle progress and insulin secretion. Phosphorylates CDK16, CDC25C, MAPT/TAU, PAK1 and WEE1. Following phosphorylation and activation by STK11/LKB1, acts as a key regulator of polarization of cortical neurons, probably by mediating phosphorylation of microtubule-associated proteins such as MAPT/TAU at 'Thr-523' and 'Ser-573'. Also regulates neuron polarization by mediating phosphorylation of WEE1 at 'Ser-642' in post-mitotic neurons, leading to down-regulate WEE1 activity in polarized neurons. Plays a role in the regulation of the mitotic cell cycle progress and the onset of mitosis. Plays a role in the regulation of insulin secretion in response to elevated glucose levels, probably via phosphorylation of CDK16 and PAK1. While BRSK2 phosphorylated at Thr-175 can inhibit insulin secretion, BRSK2 phosphorylated at Thr-261 can promote insulin secretion. Regulates reorganization of the actin cytoskeleton. May play a role in the apoptotic response triggered by endoplasmic reticulum (ER) stress. The sequence is that of Serine/threonine-protein kinase BRSK2 (Brsk2) from Rattus norvegicus (Rat).